The following is a 113-amino-acid chain: MADSCIFCKIAQKQIPSTIVYEDDEIFAFKDINPIAPIHILVIPKQHIASLNEITEENEAFIGKVLYKVSLIGKKECPEGYRVVNNIGEDAGQTVKHIHFHILGGKKLAWDKL.

Zn(2+)-binding residues include C5 and C8. The HIT domain maps to 6–113 (IFCKIAQKQI…GGKKLAWDKL (108 aa)). D31 lines the AMP pocket. Residue H47 coordinates Zn(2+). N86, G92, and T94 together coordinate AMP. H97 lines the Zn(2+) pocket. The Histidine triad motif signature appears at 97 to 101 (HIHFH). H99 and H101 together coordinate AMP. H99 acts as the Tele-AMP-histidine intermediate in catalysis.

Belongs to the HINT family.

The protein resides in the nucleus. It localises to the cytoplasm. It carries out the reaction adenosine 5'-phosphoramidate + H2O = AMP + NH4(+). Its function is as follows. Hydrolyzes purine nucleotide phosphoramidates with a single phosphate group, including adenosine 5'monophosphoramidate (AMP-NH2), adenosine 5'monophosphomorpholidate (AMP-morpholidate) and guanosine 5'monophosphomorpholidate (GMP-morpholidate). Hydrolyzes lysyl-AMP (AMP-N-epsilon-(N-alpha-acetyl lysine methyl ester)) generated by lysine tRNA ligase, as well as Met-AMP, His-AMP and Asp-AMP, lysyl-GMP (GMP-N-epsilon-(N-alpha-acetyl lysine methyl ester)) and AMP-N-alanine methyl ester. May also function as scaffolding protein that mediates protein-protein interactions. The chain is Histidine triad nucleotide-binding protein from Entamoeba histolytica (strain ATCC 30459 / HM-1:IMSS / ABRM).